We begin with the raw amino-acid sequence, 261 residues long: NAD(P)H-quinone oxidoreductase subunit K, chloroplastic (261 aa).

[4Fe-4S] cluster-binding residues include Cys64, Cys65, Cys129, and Cys160.

Belongs to the complex I 20 kDa subunit family. As to quaternary structure, NDH is composed of at least 16 different subunits, 5 of which are encoded in the nucleus. It depends on [4Fe-4S] cluster as a cofactor.

It is found in the plastid. Its subcellular location is the chloroplast thylakoid membrane. It carries out the reaction a plastoquinone + NADH + (n+1) H(+)(in) = a plastoquinol + NAD(+) + n H(+)(out). It catalyses the reaction a plastoquinone + NADPH + (n+1) H(+)(in) = a plastoquinol + NADP(+) + n H(+)(out). Its function is as follows. NDH shuttles electrons from NAD(P)H:plastoquinone, via FMN and iron-sulfur (Fe-S) centers, to quinones in the photosynthetic chain and possibly in a chloroplast respiratory chain. The immediate electron acceptor for the enzyme in this species is believed to be plastoquinone. Couples the redox reaction to proton translocation, and thus conserves the redox energy in a proton gradient. The protein is NAD(P)H-quinone oxidoreductase subunit K, chloroplastic of Physcomitrium patens (Spreading-leaved earth moss).